The chain runs to 282 residues: Large ribosomal subunit protein uL2 (282 aa).

The tract at residues 215–282 (RHKGIRPTVR…IIRSRKETKK (68 aa)) is disordered. Positions 263-282 (RNPKKPSTKLIIRSRKETKK) are enriched in basic residues.

The protein belongs to the universal ribosomal protein uL2 family. In terms of assembly, part of the 50S ribosomal subunit. Forms a bridge to the 30S subunit in the 70S ribosome.

One of the primary rRNA binding proteins. Required for association of the 30S and 50S subunits to form the 70S ribosome, for tRNA binding and peptide bond formation. It has been suggested to have peptidyltransferase activity; this is somewhat controversial. Makes several contacts with the 16S rRNA in the 70S ribosome. The sequence is that of Large ribosomal subunit protein uL2 from Mesomycoplasma hyopneumoniae (strain J / ATCC 25934 / NCTC 10110) (Mycoplasma hyopneumoniae).